A 275-amino-acid chain; its full sequence is MRVGAHVSIAGGVDNAVTNELDVGGNCGQIFTHSPQVWQDPNIGADEAAAFREGTAADLDGPWVIHSSYLVNLCTPKDDLRAKSIDSMQAEVDAAHTLGIPYVNVHLGAHTGAGVDDGLDNAASALDELDIPDDVTVLIESDAGSGTKLGGDFEHLHEVLTRSDQDLDVCIDTAHAFAAGYDLSTEAAVNDTLAAFDDVVGLDHLQYVHLNDSKHACGTNKDEHAHIGEGHIGEAGMRAFINHDAIADVPLVLETPHEDGRGFAWNIDRVRDLRA.

Zn(2+)-binding residues include H66, H106, E140, D172, H175, H209, D222, H224, and E254.

The protein belongs to the AP endonuclease 2 family. Zn(2+) serves as cofactor.

The enzyme catalyses Endonucleolytic cleavage to 5'-phosphooligonucleotide end-products.. In terms of biological role, endonuclease IV plays a role in DNA repair. It cleaves phosphodiester bonds at apurinic or apyrimidinic (AP) sites, generating a 3'-hydroxyl group and a 5'-terminal sugar phosphate. The protein is Probable endonuclease 4 of Halobacterium salinarum (strain ATCC 29341 / DSM 671 / R1).